A 506-amino-acid chain; its full sequence is ATP synthase subunit alpha, plastid (506 aa).

170-177 (GDRQTGKT) provides a ligand contact to ATP.

It belongs to the ATPase alpha/beta chains family. As to quaternary structure, F-type ATPases have 2 components, CF(1) - the catalytic core - and CF(0) - the membrane proton channel. CF(1) has five subunits: alpha(3), beta(3), gamma(1), delta(1), epsilon(1). CF(0) has four main subunits: a, b, b' and c.

It is found in the plastid membrane. It carries out the reaction ATP + H2O + 4 H(+)(in) = ADP + phosphate + 5 H(+)(out). Functionally, produces ATP from ADP in the presence of a proton gradient across the membrane. The alpha chain is a regulatory subunit. This Prototheca wickerhamii protein is ATP synthase subunit alpha, plastid.